Reading from the N-terminus, the 1094-residue chain is Protein phosphatase 2C and cyclic nucleotide-binding/kinase domain-containing protein (1094 aa).

The PPM-type phosphatase domain maps to 107 to 397 (RCSFLSQRGY…DDITIIVVHI (291 aa)). Residues Asp-148, Gly-149, Asp-344, and Asp-388 each contribute to the Mn(2+) site. A nucleoside 3',5'-cyclic phosphate contacts are provided by residues 491 to 616 (LFRK…RSVD) and 617 to 758 (LLSR…RHSS). Residues 785-1038 (TTCLSTTDCS…PESIKKHPWF (254 aa)) form the Protein kinase domain. ATP is bound by residues 791–799 (TDCSEIGLV) and Lys-811.

It in the N-terminal section; belongs to the PP2C family. This sequence in the C-terminal section; belongs to the protein kinase superfamily. AGC Ser/Thr protein kinase family. Requires Mg(2+) as cofactor. Mn(2+) is required as a cofactor.

It catalyses the reaction O-phospho-L-seryl-[protein] + H2O = L-seryl-[protein] + phosphate. It carries out the reaction O-phospho-L-threonyl-[protein] + H2O = L-threonyl-[protein] + phosphate. This is Protein phosphatase 2C and cyclic nucleotide-binding/kinase domain-containing protein from Arabidopsis thaliana (Mouse-ear cress).